The chain runs to 210 residues: Peptidyl-tRNA hydrolase (210 aa).

Residue Y15 participates in tRNA binding. The active-site Proton acceptor is the H20. Residues F66, N68, and N114 each coordinate tRNA. The interval 186–210 is disordered; sequence IHTSKPPRPKPPRREPGDGGTPATA.

This sequence belongs to the PTH family. Monomer.

Its subcellular location is the cytoplasm. The catalysed reaction is an N-acyl-L-alpha-aminoacyl-tRNA + H2O = an N-acyl-L-amino acid + a tRNA + H(+). Its function is as follows. Hydrolyzes ribosome-free peptidyl-tRNAs (with 1 or more amino acids incorporated), which drop off the ribosome during protein synthesis, or as a result of ribosome stalling. Catalyzes the release of premature peptidyl moieties from peptidyl-tRNA molecules trapped in stalled 50S ribosomal subunits, and thus maintains levels of free tRNAs and 50S ribosomes. The polypeptide is Peptidyl-tRNA hydrolase (Variovorax paradoxus (strain S110)).